The chain runs to 81 residues: High-potential iron-sulfur protein (81 aa).

The [4Fe-4S] cluster site is built by Cys-43, Cys-46, Cys-59, and Cys-73.

Belongs to the high-potential iron-sulfur protein (HiPIP) family. In terms of assembly, homodimer.

The protein resides in the periplasm. In terms of biological role, specific class of high-redox-potential 4Fe-4S ferredoxins. Functions in anaerobic electron transport in most purple and in some other photosynthetic bacteria and in at least one genus (Paracoccus) of halophilic, denitrifying bacteria. This is High-potential iron-sulfur protein from Halochromatium salexigens (Chromatium salexigens).